The primary structure comprises 127 residues: Protein ApaG (127 aa).

The ApaG domain maps to 3–127 (ESEKYRIEVE…FMLAMPRVLH (125 aa)).

This chain is Protein ApaG, found in Aromatoleum aromaticum (strain DSM 19018 / LMG 30748 / EbN1) (Azoarcus sp. (strain EbN1)).